Reading from the N-terminus, the 216-residue chain is tRNA (guanine-N(7)-)-methyltransferase (216 aa).

S-adenosyl-L-methionine contacts are provided by E44, E69, N96, and D118. The active site involves D118. K122 lines the substrate pocket. Residues 124 to 129 (RHEKRR) are interaction with RNA. Substrate contacts are provided by residues D154 and 191–194 (TEYE).

This sequence belongs to the class I-like SAM-binding methyltransferase superfamily. TrmB family.

It carries out the reaction guanosine(46) in tRNA + S-adenosyl-L-methionine = N(7)-methylguanosine(46) in tRNA + S-adenosyl-L-homocysteine. Its pathway is tRNA modification; N(7)-methylguanine-tRNA biosynthesis. Functionally, catalyzes the formation of N(7)-methylguanine at position 46 (m7G46) in tRNA. This is tRNA (guanine-N(7)-)-methyltransferase from Geobacillus thermodenitrificans (strain NG80-2).